The following is a 237-amino-acid chain: Uridylate kinase (237 aa).

11 to 14 contributes to the ATP binding site; it reads KLSG. Gly53 lines the UMP pocket. Residues Gly54 and Arg58 each coordinate ATP. Residues Asp73 and 134–141 contribute to the UMP site; that span reads TGNPFFTT. The ATP site is built by Thr161, Tyr167, and Asp170.

The protein belongs to the UMP kinase family. As to quaternary structure, homohexamer.

The protein localises to the cytoplasm. The enzyme catalyses UMP + ATP = UDP + ADP. Its pathway is pyrimidine metabolism; CTP biosynthesis via de novo pathway; UDP from UMP (UMPK route): step 1/1. Its activity is regulated as follows. Inhibited by UTP. Catalyzes the reversible phosphorylation of UMP to UDP. In Burkholderia lata (strain ATCC 17760 / DSM 23089 / LMG 22485 / NCIMB 9086 / R18194 / 383), this protein is Uridylate kinase.